The primary structure comprises 280 residues: Adenosylcobinamide-GDP ribazoletransferase (280 aa).

Helical transmembrane passes span 4–24 (YLLA…GISM), 39–59 (VVGA…QVIF), 61–81 (GPVL…FNHL), 108–128 (TIGT…YGSI), 196–216 (FLIG…WIGL), and 255–275 (TALI…MGGF).

The protein belongs to the CobS family. The cofactor is Mg(2+).

It is found in the cell membrane. The enzyme catalyses alpha-ribazole + adenosylcob(III)inamide-GDP = adenosylcob(III)alamin + GMP + H(+). It carries out the reaction alpha-ribazole 5'-phosphate + adenosylcob(III)inamide-GDP = adenosylcob(III)alamin 5'-phosphate + GMP + H(+). It functions in the pathway cofactor biosynthesis; adenosylcobalamin biosynthesis; adenosylcobalamin from cob(II)yrinate a,c-diamide: step 7/7. Functionally, joins adenosylcobinamide-GDP and alpha-ribazole to generate adenosylcobalamin (Ado-cobalamin). Also synthesizes adenosylcobalamin 5'-phosphate from adenosylcobinamide-GDP and alpha-ribazole 5'-phosphate. This chain is Adenosylcobinamide-GDP ribazoletransferase, found in Methanosarcina barkeri (strain Fusaro / DSM 804).